We begin with the raw amino-acid sequence, 266 residues long: Small ribosomal subunit protein mS42 (266 aa).

This sequence belongs to the mitochondrion-specific ribosomal protein mS42 family. In terms of assembly, component of the mitochondrial small ribosomal subunit (mt-SSU). Mature yeast 74S mitochondrial ribosomes consist of a small (37S) and a large (54S) subunit. The 37S small subunit contains a 15S ribosomal RNA (15S mt-rRNA) and 34 different proteins. The 54S large subunit contains a 21S rRNA (21S mt-rRNA) and 46 different proteins. mS42 forms a heterodimer with mS43, building a large protuberance adjacent to the mRNA channel exit in the mt-SSU body.

Its subcellular location is the mitochondrion. Component of the mitochondrial ribosome (mitoribosome), a dedicated translation machinery responsible for the synthesis of mitochondrial genome-encoded proteins, including at least some of the essential transmembrane subunits of the mitochondrial respiratory chain. The mitoribosomes are attached to the mitochondrial inner membrane and translation products are cotranslationally integrated into the membrane. The polypeptide is Small ribosomal subunit protein mS42 (RSM26) (Saccharomyces cerevisiae (strain ATCC 204508 / S288c) (Baker's yeast)).